The primary structure comprises 224 residues: UPF0758 protein NE1464 (224 aa).

One can recognise an MPN domain in the interval 102 to 224 (IMDSPQSVRN…VVSFAERGLI (123 aa)). Residues His-173, His-175, and Asp-186 each coordinate Zn(2+). The JAMM motif motif lies at 173 to 186 (HNHPSGIAEPSTAD).

Belongs to the UPF0758 family.

This is UPF0758 protein NE1464 from Nitrosomonas europaea (strain ATCC 19718 / CIP 103999 / KCTC 2705 / NBRC 14298).